The following is a 239-amino-acid chain: 1-(5-phosphoribosyl)-5-[(5-phosphoribosylamino)methylideneamino] imidazole-4-carboxamide isomerase (239 aa).

The active-site Proton acceptor is aspartate 8. Residue aspartate 129 is the Proton donor of the active site.

The protein belongs to the HisA/HisF family.

The protein localises to the cytoplasm. It carries out the reaction 1-(5-phospho-beta-D-ribosyl)-5-[(5-phospho-beta-D-ribosylamino)methylideneamino]imidazole-4-carboxamide = 5-[(5-phospho-1-deoxy-D-ribulos-1-ylimino)methylamino]-1-(5-phospho-beta-D-ribosyl)imidazole-4-carboxamide. The protein operates within amino-acid biosynthesis; L-histidine biosynthesis; L-histidine from 5-phospho-alpha-D-ribose 1-diphosphate: step 4/9. The protein is 1-(5-phosphoribosyl)-5-[(5-phosphoribosylamino)methylideneamino] imidazole-4-carboxamide isomerase of Bacillus cytotoxicus (strain DSM 22905 / CIP 110041 / 391-98 / NVH 391-98).